The following is a 182-amino-acid chain: ADP-ribosylation factor-like protein 3 (182 aa).

A lipid anchor (N-myristoyl glycine) is attached at G2. S5 is subject to Phosphoserine. GTP is bound by residues 24–31 (GLDNAGKT), T48, 67–71 (DIGGQ), G70, 126–129 (NKQD), and 159–161 (SAL). T31 and T48 together coordinate Mg(2+).

It belongs to the small GTPase superfamily. Arf family. In terms of assembly, found in a complex with ARL3, RP2 and UNC119 (or UNC119B); RP2 induces hydrolysis of GTP ARL3 in the complex, leading to the release of UNC119 (or UNC119B). Interacts with RP2; interaction is direct and stimulated with the activated GTP-bound form of ARL3. Interacts with SYS1. Interacts with ARL2BP; the GTP-bound form interacts with ARL2BP. Microtubule-associated protein. Does not interact with TBCC. Interacts with RP2. Interacts with PDE6D; the interaction occurs specifically with the GTP-bound form of ARL3. Interacts with GGA1; the interaction recruits PKD1:PKD2 complex to trans-Golgi network and is required for ciliary targeting of PKD1:PKD2 complex. Interacts with DNAAF9.

Its subcellular location is the golgi apparatus membrane. The protein resides in the cytoplasm. The protein localises to the cytoskeleton. It is found in the spindle. It localises to the nucleus. Its subcellular location is the microtubule organizing center. The protein resides in the centrosome. The protein localises to the cell projection. It is found in the cilium. Functionally, small GTP-binding protein which cycles between an inactive GDP-bound and an active GTP-bound form, and the rate of cycling is regulated by guanine nucleotide exchange factors (GEF) and GTPase-activating proteins (GAP). Required for normal cytokinesis and cilia signaling. Requires assistance from GTPase-activating proteins (GAPs) like RP2 and PDE6D, in order to cycle between inactive GDP-bound and active GTP-bound forms. Required for targeting proteins to the cilium, including myristoylated NPHP3 and prenylated INPP5E. Targets NPHP3 to the ciliary membrane by releasing myristoylated NPHP3 from UNC119B cargo adapter into the cilium. Required for PKD1:PKD2 complex targeting from the trans-Golgi network to the cilium. The chain is ADP-ribosylation factor-like protein 3 (ARL3) from Bos taurus (Bovine).